The chain runs to 699 residues: D-(-)-3-hydroxybutyrate oligomer hydrolase (699 aa).

The first 33 residues, 1-33 (MTAIRGGSRRAPGLALALLGGVLLGACHGDENA), serve as a signal peptide directing secretion. Catalysis depends on S311, which acts as the Charge relay system.

The protein belongs to the D-(-)-3-hydroxybutyrate oligomer hydrolase family.

It is found in the secreted. It catalyses the reaction (3R)-hydroxybutanoate dimer + H2O = 2 (R)-3-hydroxybutanoate + H(+). It functions in the pathway lipid metabolism; butanoate metabolism. In terms of biological role, participates in the degradation of poly-3-hydroxybutyrate (PHB). It works downstream of poly(3-hydroxybutyrate) depolymerase, hydrolyzing D(-)-3-hydroxybutyrate oligomers of various length (3HB-oligomers) into 3HB-monomers. The protein is D-(-)-3-hydroxybutyrate oligomer hydrolase of Burkholderia mallei (strain ATCC 23344).